The sequence spans 129 residues: Small ribosomal subunit protein bS6 (129 aa).

Residues 110 to 121 (FVRRDDERREDT) show a composition bias toward basic and acidic residues. The segment at 110-129 (FVRRDDERREDTVEAASSEE) is disordered.

This sequence belongs to the bacterial ribosomal protein bS6 family.

Binds together with bS18 to 16S ribosomal RNA. This is Small ribosomal subunit protein bS6 from Aeromonas salmonicida (strain A449).